The primary structure comprises 304 residues: Plasmodesmata-located protein 3 (304 aa).

The N-terminal stretch at 1-26 (MGFYSLKQLLLLYIIIMALFSDLKLA) is a signal peptide. Residues 27–272 (KSSSPEYTNL…SSSSGTTGKT (246 aa)) lie on the Extracellular side of the membrane. Gnk2-homologous domains follow at residues 34-138 (TNLI…ISGF) and 143-242 (GMEL…FYPN). Cystine bridges form between cysteine 41-cysteine 116, cysteine 92-cysteine 101, cysteine 104-cysteine 129, cysteine 151-cysteine 220, cysteine 196-cysteine 205, and cysteine 208-cysteine 233. A helical transmembrane segment spans residues 273–293 (VAIIVGGTAGVGFLVICLLFV). The tract at residues 273–293 (VAIIVGGTAGVGFLVICLLFV) is necessary and sufficient for plasmodesmal targeting. Residues 294-304 (KNLMKKKYDDY) lie on the Cytoplasmic side of the membrane.

This sequence belongs to the cysteine-rich repeat secretory protein family. Plasmodesmata-located proteins (PDLD) subfamily. (Microbial infection) Interacts with Grapevine fanleaf virus (GFLV) 2B-MP. In terms of tissue distribution, highly expressed in inflorescence pedacel and shoot apex. Expressed in the outermost L1 layer of the shoot apical meristem and in the epidermis of bulging floral primordia. Within the L1, expression was restricted to the peripheral zone (at protein level).

It is found in the cell membrane. It localises to the cell junction. Its subcellular location is the plasmodesma. In terms of biological role, modulates cell-to-cell trafficking. This chain is Plasmodesmata-located protein 3, found in Arabidopsis thaliana (Mouse-ear cress).